A 115-amino-acid polypeptide reads, in one-letter code: NAD(P)H-quinone oxidoreductase subunit M, organellar chromatophore (115 aa).

This sequence belongs to the complex I NdhM subunit family. As to quaternary structure, NDH-1 can be composed of about 15 different subunits; different subcomplexes with different compositions have been identified which probably have different functions.

Its subcellular location is the plastid. It is found in the organellar chromatophore thylakoid membrane. The catalysed reaction is a plastoquinone + NADH + (n+1) H(+)(in) = a plastoquinol + NAD(+) + n H(+)(out). The enzyme catalyses a plastoquinone + NADPH + (n+1) H(+)(in) = a plastoquinol + NADP(+) + n H(+)(out). Functionally, NDH-1 shuttles electrons from an unknown electron donor, via FMN and iron-sulfur (Fe-S) centers, to quinones in the respiratory and/or the photosynthetic chain. The immediate electron acceptor for the enzyme in this species is believed to be plastoquinone. Couples the redox reaction to proton translocation, and thus conserves the redox energy in a proton gradient. This is NAD(P)H-quinone oxidoreductase subunit M, organellar chromatophore from Paulinella chromatophora.